A 493-amino-acid polypeptide reads, in one-letter code: Dipeptide and tripeptide permease B (493 aa).

The Cytoplasmic portion of the chain corresponds to 1-27 (MERSTPTGLLQQPKPFFMIFFVELWER). A helical transmembrane segment spans residues 28–48 (FGYYGVQGILAVFFVQQLGFS). The Periplasmic portion of the chain corresponds to 49 to 52 (QEQA). Residues 53–73 (FVTFGAFAALVYGLISIGGYV) form a helical membrane-spanning segment. The Cytoplasmic portion of the chain corresponds to 74-82 (GDHLLGTKR). The helical transmembrane segment at 83–103 (TMVLGAVVLAAGYFATGLSLY) threads the bilayer. Topologically, residues 104 to 106 (QPN) are periplasmic. Residues 107 to 127 (LIFFALGTIAVGNGLFKANPA) form a helical membrane-spanning segment. Residues 128–146 (SLLSKCYPPKDPRLDGAFT) are Cytoplasmic-facing. Residues 147–167 (LFYMSINIGSLLSLSLAPVIA) form a helical membrane-spanning segment. Residues 168 to 169 (ER) are Periplasmic-facing. The helical transmembrane segment at 170-190 (FGYTVTYYLCGIGLIFALLVY) threads the bilayer. The Cytoplasmic segment spans residues 191–212 (FCCRHMVRHIGSEPDTKPLNWR). 2 consecutive transmembrane segments (helical) span residues 213–233 (NLLLVLLGSAVMICVCAWLMN) and 234–254 (HVFIANLVLIALSLIVVFIFF). The Cytoplasmic portion of the chain corresponds to 255–267 (REASKQDRLGRNK). A helical transmembrane segment spans residues 268–288 (MFVAFILMIEAIVFYVLYAQM). Residues 289-311 (PTSLNFFAINNVHHEILGFSINP) are Periplasmic-facing. Residues 312 to 332 (VSFQALNPFWVVVASPILASI) traverse the membrane as a helical segment. Residues 333–350 (YTRLGSQNRDLSMPAKFT) are Cytoplasmic-facing. A helical transmembrane segment spans residues 351 to 371 (LGMFLCSLGFLTAAAAGMWFA). Residues 372 to 379 (DAQGLTSP) are Periplasmic-facing. Residues 380–400 (WFIVLVYLFQSLGELMISALG) traverse the membrane as a helical segment. Over 401–424 (LAMVAALVPQYLMGFILGMWFLTQ) the chain is Cytoplasmic. Residues 425–445 (AASFLIGGYVATFTATPEGMT) traverse the membrane as a helical segment. At 446 to 456 (DPLETLPIYTD) the chain is on the periplasmic side. The chain crosses the membrane as a helical span at residues 457-477 (VFGKIGMVTLVIALVMALLIP). Residues 478–493 (WLNRMINSSAAEDAVA) lie on the Cytoplasmic side of the membrane.

It belongs to the major facilitator superfamily. Proton-dependent oligopeptide transporter (POT/PTR) (TC 2.A.17) family. DtpB subfamily.

The protein resides in the cell inner membrane. Proton-dependent permease that transports di- and tripeptides. The chain is Dipeptide and tripeptide permease B from Yersinia enterocolitica serotype O:8 / biotype 1B (strain NCTC 13174 / 8081).